We begin with the raw amino-acid sequence, 196 residues long: ATP-dependent Clp protease proteolytic subunit (196 aa).

Catalysis depends on S98, which acts as the Nucleophile. H123 is an active-site residue.

It belongs to the peptidase S14 family. As to quaternary structure, fourteen ClpP subunits assemble into 2 heptameric rings which stack back to back to give a disk-like structure with a central cavity, resembling the structure of eukaryotic proteasomes.

It is found in the cytoplasm. The catalysed reaction is Hydrolysis of proteins to small peptides in the presence of ATP and magnesium. alpha-casein is the usual test substrate. In the absence of ATP, only oligopeptides shorter than five residues are hydrolyzed (such as succinyl-Leu-Tyr-|-NHMec, and Leu-Tyr-Leu-|-Tyr-Trp, in which cleavage of the -Tyr-|-Leu- and -Tyr-|-Trp bonds also occurs).. Functionally, cleaves peptides in various proteins in a process that requires ATP hydrolysis. Has a chymotrypsin-like activity. Plays a major role in the degradation of misfolded proteins. The polypeptide is ATP-dependent Clp protease proteolytic subunit (Anoxybacillus flavithermus (strain DSM 21510 / WK1)).